The following is a 294-amino-acid chain: 1D-myo-inositol 2-acetamido-2-deoxy-alpha-D-glucopyranoside deacetylase (294 aa).

Zn(2+)-binding residues include His-15, Asp-18, and His-150.

It belongs to the MshB deacetylase family. Zn(2+) is required as a cofactor.

It carries out the reaction 1D-myo-inositol 2-acetamido-2-deoxy-alpha-D-glucopyranoside + H2O = 1D-myo-inositol 2-amino-2-deoxy-alpha-D-glucopyranoside + acetate. Catalyzes the deacetylation of 1D-myo-inositol 2-acetamido-2-deoxy-alpha-D-glucopyranoside (GlcNAc-Ins) in the mycothiol biosynthesis pathway. The chain is 1D-myo-inositol 2-acetamido-2-deoxy-alpha-D-glucopyranoside deacetylase from Streptomyces avermitilis (strain ATCC 31267 / DSM 46492 / JCM 5070 / NBRC 14893 / NCIMB 12804 / NRRL 8165 / MA-4680).